The sequence spans 217 residues: Thymidylate kinase (217 aa).

Residue 16 to 23 (GIDGAGKT) coordinates ATP.

Belongs to the thymidylate kinase family.

The enzyme catalyses dTMP + ATP = dTDP + ADP. Phosphorylation of dTMP to form dTDP in both de novo and salvage pathways of dTTP synthesis. This is Thymidylate kinase from Xylella fastidiosa (strain M12).